Here is a 349-residue protein sequence, read N- to C-terminus: Quinone oxidoreductase-like protein 2 (349 aa).

Lys35 is modified (N6-acetyllysine). Residue Lys200 is modified to N6-succinyllysine.

The protein belongs to the zinc-containing alcohol dehydrogenase family. Quinone oxidoreductase subfamily.

The protein is Quinone oxidoreductase-like protein 2 of Bos taurus (Bovine).